We begin with the raw amino-acid sequence, 149 residues long: Transcriptional repressor NrdR (149 aa).

Residues 3 to 34 (CPFCSAVDTKVIDSRLVGDGSQVRRRRQCLVC) fold into a zinc finger. Residues 49–139 (PRVVKSNGVR…VYRSFEDVRE (91 aa)) form the ATP-cone domain.

This sequence belongs to the NrdR family. Requires Zn(2+) as cofactor.

Functionally, negatively regulates transcription of bacterial ribonucleotide reductase nrd genes and operons by binding to NrdR-boxes. This Edwardsiella ictaluri (strain 93-146) protein is Transcriptional repressor NrdR.